Here is a 319-residue protein sequence, read N- to C-terminus: Acetyl-coenzyme A carboxylase carboxyl transferase subunit alpha (319 aa).

In terms of domain architecture, CoA carboxyltransferase C-terminal spans 35 to 296; sequence DLEKEIKQLE…KQRLLEQLKE (262 aa).

Belongs to the AccA family. In terms of assembly, acetyl-CoA carboxylase is a heterohexamer composed of biotin carboxyl carrier protein (AccB), biotin carboxylase (AccC) and two subunits each of ACCase subunit alpha (AccA) and ACCase subunit beta (AccD).

It is found in the cytoplasm. The catalysed reaction is N(6)-carboxybiotinyl-L-lysyl-[protein] + acetyl-CoA = N(6)-biotinyl-L-lysyl-[protein] + malonyl-CoA. Its pathway is lipid metabolism; malonyl-CoA biosynthesis; malonyl-CoA from acetyl-CoA: step 1/1. In terms of biological role, component of the acetyl coenzyme A carboxylase (ACC) complex. First, biotin carboxylase catalyzes the carboxylation of biotin on its carrier protein (BCCP) and then the CO(2) group is transferred by the carboxyltransferase to acetyl-CoA to form malonyl-CoA. The protein is Acetyl-coenzyme A carboxylase carboxyl transferase subunit alpha of Aliivibrio fischeri (strain ATCC 700601 / ES114) (Vibrio fischeri).